A 217-amino-acid polypeptide reads, in one-letter code: 25 kDa ookinete surface antigen (217 aa).

The signal sequence occupies residues Met1–Ser16. The EGF-like 1; truncated domain occupies Cys30 to Glu59. EGF-like domains follow at residues Lys61 to Ile106, Ile106 to Ser150, and Gly153 to Thr193. Cystine bridges form between Cys65–Cys80, Cys74–Cys92, Cys94–Cys105, Cys110–Cys120, Cys115–Cys133, Cys135–Cys149, Cys157–Cys168, Cys161–Cys177, and Cys179–Cys192. An N-linked (GlcNAc...) asparagine glycan is attached at Asn112. N-linked (GlcNAc...) asparagine glycosylation is found at Asn165 and Asn187. The GPI-anchor amidated serine moiety is linked to residue Ser196. Residues Val197–Met217 constitute a propeptide, removed in mature form. Asn202 carries an N-linked (GlcNAc...) asparagine glycan.

It localises to the cell membrane. The protein is 25 kDa ookinete surface antigen of Plasmodium reichenowi.